A 202-amino-acid chain; its full sequence is uncharacterized protein (202 aa).

Residues 175 to 195 (INTGIALFIILTSLLVYFIQF) traverse the membrane as a helical segment.

The protein resides in the membrane. This is an uncharacterized protein from Dictyostelium discoideum (Social amoeba).